A 383-amino-acid chain; its full sequence is Phosphoenolpyruvate/phosphate translocator 2, chloroplastic (383 aa).

The N-terminal 55 residues, 1-55, are a transit peptide targeting the chloroplast; sequence MFALTFLNPNPRLPSPLFLAKSTPESALSRRSRAFSSSNSYPWRPNLRFNGFKLK. The next 8 helical transmembrane spans lie at 76–96, 108–128, 143–163, 179–199, 210–232, 253–273, 299–319, and 350–369; these read GLKL…YNIF, ATVT…MWLL, VIVQ…VSLG, FFTV…WIVC, LASF…SNVT, INLF…LAIL, IMSL…YMIL, and VSPL…YLYS. Positions 93–212 constitute an EamA domain; sequence YNIFNKQVLR…PIVAGVSLAS (120 aa).

Belongs to the TPT transporter family. PPT (TC 2.A.7.9) subfamily. As to expression, widely expressed in leaves throughout development. In flowers, expressed in sepals and pistils.

The protein localises to the plastid. It localises to the chloroplast membrane. In terms of biological role, phosphoenolpyruvate/phosphate translocator that transports phosphoenolpyruvate (PEP), 2-phosphoglycerate and 3-phosphoglycerate. This Arabidopsis thaliana (Mouse-ear cress) protein is Phosphoenolpyruvate/phosphate translocator 2, chloroplastic (PPT2).